The primary structure comprises 304 residues: Glutaminase (304 aa).

Substrate contacts are provided by Ser-63, Asn-113, Glu-157, Asn-164, Tyr-188, Tyr-240, and Val-258.

It belongs to the glutaminase family. In terms of assembly, homotetramer.

It carries out the reaction L-glutamine + H2O = L-glutamate + NH4(+). This chain is Glutaminase, found in Christiangramia forsetii (strain DSM 17595 / CGMCC 1.15422 / KT0803) (Gramella forsetii).